The following is a 544-amino-acid chain: Tyrosine-protein kinase fynb (544 aa).

Gly2 carries the N-myristoyl glycine lipid modification. 2 S-palmitoyl cysteine lipidation sites follow: Cys3 and Cys6. One can recognise an SH3 domain in the interval Thr89–Ser150. The SH2 domain occupies Trp156–Cys253. A Protein kinase domain is found at Leu278–Phe531. ATP-binding positions include Leu284 to Val292 and Lys306. Residue Asp397 is the Proton acceptor of the active site. A Phosphotyrosine; by autocatalysis modification is found at Tyr427. Tyr538 bears the Phosphotyrosine mark.

This sequence belongs to the protein kinase superfamily. Tyr protein kinase family. SRC subfamily. Requires Mn(2+) as cofactor.

It localises to the cytoplasm. It catalyses the reaction L-tyrosyl-[protein] + ATP = O-phospho-L-tyrosyl-[protein] + ADP + H(+). Inhibited by phosphorylation of Tyr-538 by leukocyte common antigen and activated by dephosphorylation of this site. In terms of biological role, tyrosine-protein kinase implicated in the control of cell growth. Plays a role in the regulation of intracellular calcium levels. Required in brain development and mature brain function with important roles in the regulation of axon growth, axon guidance, and neurite extension. Role in CNTN1-mediated signaling. The sequence is that of Tyrosine-protein kinase fynb (fynb) from Danio rerio (Zebrafish).